Here is a 597-residue protein sequence, read N- to C-terminus: Elongation factor 4 (597 aa).

The tr-type G domain occupies 2–184 (KHIRNFSIIA…NIVSAIPAPE (183 aa)). GTP is bound by residues 14-19 (DHGKST) and 131-134 (NKID).

Belongs to the TRAFAC class translation factor GTPase superfamily. Classic translation factor GTPase family. LepA subfamily.

It is found in the cell inner membrane. The enzyme catalyses GTP + H2O = GDP + phosphate + H(+). Required for accurate and efficient protein synthesis under certain stress conditions. May act as a fidelity factor of the translation reaction, by catalyzing a one-codon backward translocation of tRNAs on improperly translocated ribosomes. Back-translocation proceeds from a post-translocation (POST) complex to a pre-translocation (PRE) complex, thus giving elongation factor G a second chance to translocate the tRNAs correctly. Binds to ribosomes in a GTP-dependent manner. The chain is Elongation factor 4 from Vibrio campbellii (strain ATCC BAA-1116).